The chain runs to 496 residues: Versicolorin B desaturase stcL (496 aa).

The chain crosses the membrane as a helical span at residues 3–23; the sequence is FLSLPILTALGAVVYVLFQLV. Cys-440 serves as a coordination point for heme.

The protein belongs to the cytochrome P450 family. The cofactor is heme.

Its subcellular location is the membrane. It carries out the reaction versicolorin B + NADPH + O2 + H(+) = versicolorin A + NADP(+) + 2 H2O. Its pathway is mycotoxin biosynthesis; sterigmatocystin biosynthesis. Functionally, cytochrome P450 monooxygenase; part of the gene cluster that mediates the biosynthesis of sterigmatocystin (ST), a polyketide-derived furanocoumarin which is part of the most toxic and carcinogenic compounds among the known mycotoxins. The first step in the biosynthesis of sterigmatocystin is the production of hexanoate by the fatty acid synthase (FAS) units stcJ and stcK. The polyketide backbone is assembled by the non-reducing polyketide synthase stcA by condensation of the starter hexanoyl-CoA and 7 malonyl-CoA extender units followed by cyclization and release of norsolorinic acid. Norsolorinic acid is the first stable intermediate in the biosynthesis of sterigmatocystin and is converted into averantin (AVN) by the ketoreductase stcE which reduces the hexanoate ketone to an alcohol. Averantin is then oxidized into 5'-hydroxyaverantin (HAVN) by the cytochrome P450 monooxygenase stcF. 5'-hydroxyaverantin is further converted to 5'-oxyaverantin (OAVN) by the 5'-hydroxyaverantin dehydrogenase stcG. The next step is the conversion of OAVN into averufin (AVF) which is catalyzed by a yet to be identified enzyme. The cytochrome P450 monooxygenase stcB and the flavin-binding monooxygenase stcW are both required for the conversion of averufin to 1-hydroxyversicolorone. The esterase stcI probably catalyzes the formation of versiconal hemiacetal acetate from 1-hydroxyversicolorone. The oxydoreductase stcN then probably catalyzes the biosynthetic step from versiconal to versicolorin B (VERB). The next step is performed by the versicolorin B desaturase stcL to produce versicolorin A (VERA). The ketoreductase stcU and the cytochrome P450 monooxygenase stcS are involved in the conversion of versicolorin A to demethylsterigmatocystin. The Baeyer-Villiger oxidas stcQ and the reductase stcR might be involved in the biosynthetic step from versicolorin A to demethylsterigmatocystin. The final step in the biosynthesis of sterigmatocystin is the methylation of demethylsterigmatocystin catalyzed by the methyltransferase stcP. This chain is Versicolorin B desaturase stcL, found in Emericella nidulans (strain FGSC A4 / ATCC 38163 / CBS 112.46 / NRRL 194 / M139) (Aspergillus nidulans).